The chain runs to 164 residues: Large ribosomal subunit protein uL10 (164 aa).

This sequence belongs to the universal ribosomal protein uL10 family. Part of the ribosomal stalk of the 50S ribosomal subunit. The N-terminus interacts with L11 and the large rRNA to form the base of the stalk. The C-terminus forms an elongated spine to which L12 dimers bind in a sequential fashion forming a multimeric L10(L12)X complex.

Its function is as follows. Forms part of the ribosomal stalk, playing a central role in the interaction of the ribosome with GTP-bound translation factors. The chain is Large ribosomal subunit protein uL10 from Helicobacter pylori (strain P12).